The following is a 130-amino-acid chain: Phosphoribosyl-AMP cyclohydrolase (130 aa).

Residue aspartate 77 coordinates Mg(2+). Residue cysteine 78 coordinates Zn(2+). The Mg(2+) site is built by aspartate 79 and aspartate 81. Zn(2+)-binding residues include cysteine 95 and cysteine 102.

Belongs to the PRA-CH family. Homodimer. Requires Mg(2+) as cofactor. The cofactor is Zn(2+).

It is found in the cytoplasm. The catalysed reaction is 1-(5-phospho-beta-D-ribosyl)-5'-AMP + H2O = 1-(5-phospho-beta-D-ribosyl)-5-[(5-phospho-beta-D-ribosylamino)methylideneamino]imidazole-4-carboxamide. It participates in amino-acid biosynthesis; L-histidine biosynthesis; L-histidine from 5-phospho-alpha-D-ribose 1-diphosphate: step 3/9. Its function is as follows. Catalyzes the hydrolysis of the adenine ring of phosphoribosyl-AMP. This chain is Phosphoribosyl-AMP cyclohydrolase, found in Pseudomonas savastanoi pv. phaseolicola (strain 1448A / Race 6) (Pseudomonas syringae pv. phaseolicola (strain 1448A / Race 6)).